Reading from the N-terminus, the 1359-residue chain is DNA-directed RNA polymerase subunit beta (1359 aa).

It belongs to the RNA polymerase beta chain family. In terms of assembly, the RNAP catalytic core consists of 2 alpha, 1 beta, 1 beta' and 1 omega subunit. When a sigma factor is associated with the core the holoenzyme is formed, which can initiate transcription.

The enzyme catalyses RNA(n) + a ribonucleoside 5'-triphosphate = RNA(n+1) + diphosphate. Functionally, DNA-dependent RNA polymerase catalyzes the transcription of DNA into RNA using the four ribonucleoside triphosphates as substrates. This is DNA-directed RNA polymerase subunit beta from Nitrosococcus oceani (strain ATCC 19707 / BCRC 17464 / JCM 30415 / NCIMB 11848 / C-107).